Here is a 528-residue protein sequence, read N- to C-terminus: Bifunctional dihydrofolate reductase-thymidylate synthase (528 aa).

The segment at 1–20 (MASELLANPTNGSGITRPDP) is disordered. A DHFR domain is found at 23-200 (TYQVVVAATQ…IRYCFTTYVR (178 aa)). Val27 lines the substrate pocket. NADP(+) is bound by residues Ala29 and 35–41 (GIGKDGK). Asp49 lines the substrate pocket. NADP(+)-binding positions include 73–75 (RKT) and 94–97 (LTRS). Substrate is bound by residues Ile136, Tyr142, and Thr157. An NADP(+)-binding site is contributed by 137 to 144 (GGGQIYRE). The interval 202-528 (RNSVAELTSQ…HQKIEMKMAV (327 aa)) is thymidylate synthase. DUMP is bound at residue Arg264. Cys409 is an active-site residue. Residues His410, 428–432 (QRSAD), Asn440, and 470–472 (HVY) each bind dUMP.

It in the N-terminal section; belongs to the dihydrofolate reductase family. In the C-terminal section; belongs to the thymidylate synthase family.

The enzyme catalyses (6S)-5,6,7,8-tetrahydrofolate + NADP(+) = 7,8-dihydrofolate + NADPH + H(+). It carries out the reaction dUMP + (6R)-5,10-methylene-5,6,7,8-tetrahydrofolate = 7,8-dihydrofolate + dTMP. Its pathway is cofactor biosynthesis; tetrahydrofolate biosynthesis; 5,6,7,8-tetrahydrofolate from 7,8-dihydrofolate: step 1/1. Bifunctional enzyme. Involved in de novo dTMP biosynthesis. Key enzyme in folate metabolism. Can play two different roles depending on the source of dihydrofolate: de novo synthesis of tetrahydrofolate or recycling of the dihydrofolate released as one of the end products of the TS catalyzed reaction. Catalyzes an essential reaction for de novo glycine and purine synthesis, DNA precursor synthesis, and for the conversion of dUMP to dTMP. In Daucus carota (Wild carrot), this protein is Bifunctional dihydrofolate reductase-thymidylate synthase.